Reading from the N-terminus, the 172-residue chain is Small ribosomal subunit protein uS5 (172 aa).

Residues 17-80 enclose the S5 DRBM domain; that stretch reads LKEKMIAVNR…EEARRNMTKV (64 aa).

This sequence belongs to the universal ribosomal protein uS5 family. As to quaternary structure, part of the 30S ribosomal subunit. Contacts proteins S4 and S8.

Functionally, with S4 and S12 plays an important role in translational accuracy. Located at the back of the 30S subunit body where it stabilizes the conformation of the head with respect to the body. This Polaromonas sp. (strain JS666 / ATCC BAA-500) protein is Small ribosomal subunit protein uS5.